A 303-amino-acid polypeptide reads, in one-letter code: Quinolinate synthase (303 aa).

The iminosuccinate site is built by histidine 24 and serine 41. Cysteine 86 provides a ligand contact to [4Fe-4S] cluster. Iminosuccinate is bound by residues 112-114 and serine 129; that span reads YIN. Cysteine 172 is a binding site for [4Fe-4S] cluster. Iminosuccinate-binding positions include 198 to 200 and threonine 215; that span reads HPE. Cysteine 260 contacts [4Fe-4S] cluster.

The protein belongs to the quinolinate synthase family. Type 2 subfamily. [4Fe-4S] cluster serves as cofactor.

It localises to the cytoplasm. The enzyme catalyses iminosuccinate + dihydroxyacetone phosphate = quinolinate + phosphate + 2 H2O + H(+). The protein operates within cofactor biosynthesis; NAD(+) biosynthesis; quinolinate from iminoaspartate: step 1/1. Its function is as follows. Catalyzes the condensation of iminoaspartate with dihydroxyacetone phosphate to form quinolinate. This is Quinolinate synthase from Caldicellulosiruptor saccharolyticus (strain ATCC 43494 / DSM 8903 / Tp8T 6331).